Consider the following 125-residue polypeptide: Small ribosomal subunit protein bS6 (125 aa).

Belongs to the bacterial ribosomal protein bS6 family.

Functionally, binds together with bS18 to 16S ribosomal RNA. In Campylobacter jejuni subsp. jejuni serotype O:23/36 (strain 81-176), this protein is Small ribosomal subunit protein bS6.